The following is a 359-amino-acid chain: Putative X-Core fused protein (359 aa).

2 disordered regions span residues 25-48 and 312-359; these read SRGRPVSRPFGPHPSPSSSAVPAD and NAPI…ESQC. The segment covering 325–352 has biased composition (basic residues); it reads VRRRGRSPRRRTPSPRRRRSESPRRRRS.

This Homo sapiens (Human) protein is Putative X-Core fused protein.